Consider the following 382-residue polypeptide: uncharacterized protein (382 aa).

The next 12 membrane-spanning stretches (helical) occupy residues 14–34 (GLLL…LWLA), 45–65 (MVSS…GYLI), 75–95 (YLAS…VGFW), 102–122 (FIAG…LMCS), 131–151 (LLAA…LLVS), 157–177 (LLHV…PLLF), 204–224 (LGVN…GLMP), 235–255 (ASIG…QWPV), 265–284 (LLVL…VMLT), 289–311 (APAL…AWAC), 325–345 (ALLL…AMLM), and 349–369 (SDNL…LMLL).

It belongs to the major facilitator superfamily. YcaD (TC 2.A.1.26) family.

It localises to the cell inner membrane. This is an uncharacterized protein from Salmonella arizonae (strain ATCC BAA-731 / CDC346-86 / RSK2980).